The primary structure comprises 2346 residues: Acetyl-CoA carboxylase 1 (2346 aa).

An N-acetylmethionine modification is found at methionine 1. A phosphoserine mark is found at serine 5, serine 23, serine 25, serine 29, serine 34, serine 48, serine 50, and serine 53. Residue threonine 58 is modified to Phosphothreonine. At serine 78 the chain carries Phosphoserine. At serine 80 the chain carries Phosphoserine; by AMPK. The Biotin carboxylation domain maps to 117-618 (VIEKVLIANN…GTGWLDRLIA (502 aa)). The region spanning 275 to 466 (SKRILNVPQE…LPAAQLQIAM (192 aa)) is the ATP-grasp domain. 315 to 320 (GGGGKG) contacts ATP. Residues glutamate 424, glutamate 437, and asparagine 439 each contribute to the Mg(2+) site. Residues glutamate 424, glutamate 437, and asparagine 439 each coordinate Mn(2+). Residue arginine 441 is part of the active site. Position 610 is a phosphothreonine (threonine 610). A Biotinyl-binding domain is found at 745 to 819 (FEKENDPSVL…DPGCVIAKMQ (75 aa)). Lysine 786 is modified (N6-biotinyllysine). Serine 835, serine 1201, serine 1216, and serine 1218 each carry phosphoserine. The residue at position 1227 (threonine 1227) is a Phosphothreonine. Phosphoserine is present on residues serine 1259, serine 1263, and serine 1273. Lysine 1334 carries the N6-acetyllysine modification. The 339-residue stretch at 1576–1914 (PYVTKDQLQS…SVYSSVPLLN (339 aa)) folds into the CoA carboxyltransferase N-terminal domain. The tract at residues 1576–2234 (PYVTKDQLQS…EDLVKKKIHN (659 aa)) is carboxyltransferase. The CoA site is built by arginine 1823, lysine 2127, and arginine 2129. Positions 1918–2234 (PIDRVIEFVP…EDLVKKKIHN (317 aa)) constitute a CoA carboxyltransferase C-terminal domain. Threonine 2153 is modified (phosphothreonine).

Monomer, homodimer, and homotetramer. Can form filamentous polymers. Interacts in its inactive phosphorylated form with the BRCT domains of BRCA1 which prevents ACACA dephosphorylation and inhibits lipid synthesis. Interacts with MID1IP1; interaction with MID1IP1 promotes oligomerization and increases its activity. Mg(2+) is required as a cofactor. The cofactor is Mn(2+). Biotin serves as cofactor. In terms of processing, phosphorylation on Ser-1263 is required for interaction with BRCA1. Post-translationally, phosphorylation at Ser-80 by AMPK inactivates enzyme activity. The biotin cofactor is covalently attached to the central biotinyl-binding domain and is required for the catalytic activity.

It is found in the cytoplasm. The protein resides in the cytosol. It carries out the reaction hydrogencarbonate + acetyl-CoA + ATP = malonyl-CoA + ADP + phosphate + H(+). The protein operates within lipid metabolism; malonyl-CoA biosynthesis; malonyl-CoA from acetyl-CoA: step 1/1. Inhibited by phosphorylation. Citrate promotes oligomerization of the protein into filaments that correspond to the most active form of the carboxylase. Its function is as follows. Cytosolic enzyme that catalyzes the carboxylation of acetyl-CoA to malonyl-CoA, the first and rate-limiting step of de novo fatty acid biosynthesis. This is a 2 steps reaction starting with the ATP-dependent carboxylation of the biotin carried by the biotin carboxyl carrier (BCC) domain followed by the transfer of the carboxyl group from carboxylated biotin to acetyl-CoA. This Bos taurus (Bovine) protein is Acetyl-CoA carboxylase 1.